The primary structure comprises 499 residues: Bifunctional purine biosynthesis protein PurH (499 aa).

Positions 1 to 144 (MINRALISVY…KNFKDVIVVT (144 aa)) constitute an MGS-like domain.

This sequence belongs to the PurH family.

The enzyme catalyses (6R)-10-formyltetrahydrofolate + 5-amino-1-(5-phospho-beta-D-ribosyl)imidazole-4-carboxamide = 5-formamido-1-(5-phospho-D-ribosyl)imidazole-4-carboxamide + (6S)-5,6,7,8-tetrahydrofolate. The catalysed reaction is IMP + H2O = 5-formamido-1-(5-phospho-D-ribosyl)imidazole-4-carboxamide. Its pathway is purine metabolism; IMP biosynthesis via de novo pathway; 5-formamido-1-(5-phospho-D-ribosyl)imidazole-4-carboxamide from 5-amino-1-(5-phospho-D-ribosyl)imidazole-4-carboxamide (10-formyl THF route): step 1/1. It participates in purine metabolism; IMP biosynthesis via de novo pathway; IMP from 5-formamido-1-(5-phospho-D-ribosyl)imidazole-4-carboxamide: step 1/1. This is Bifunctional purine biosynthesis protein PurH from Clostridium kluyveri (strain NBRC 12016).